Here is a 713-residue protein sequence, read N- to C-terminus: Peroxisomal biogenesis factor 8 (713 aa).

The segment at 1–31 (MYRLGSQGRSIQSQLQNGDSSSGRPLQLQGT) is disordered. Polar residues predominate over residues 7–30 (QGRSIQSQLQNGDSSSGRPLQLQG). A Microbody targeting signal motif is present at residues 711-713 (AKL).

Interacts with PEX5 (via N-terminus).

The protein localises to the peroxisome membrane. Essential component of the machinery required for the import of both PTS1 and PTS2 (and perhaps all) peroxisomal matrix proteins. Binding of PEX8 to the N-terminus of PEX5 cargo receptor induces a conformational change of the TPR domains and decrease their binding affinity to cargo, facilitating the release of the PTS1 proteins within the peroxisome. In Komagataella phaffii (strain GS115 / ATCC 20864) (Yeast), this protein is Peroxisomal biogenesis factor 8.